We begin with the raw amino-acid sequence, 410 residues long: Diguanylate cyclase DgcM (410 aa).

PAS domains follow at residues 3-70 (THNF…NQHD) and 129-198 (GFYA…HLPG). One can recognise a PAC domain in the interval 199 to 251 (GHKPLNFIHKLADGSTRHVQTYAGPIEIYGDKLMLCIVHDITEQKRLEEQLEH). Positions 283 to 410 (QDYSLLLIDT…NDGRNRVLAA (128 aa)) constitute a GGDEF domain. D291 contacts Mg(2+). Residues N299, H304, and D308 each coordinate substrate. A Mg(2+)-binding site is contributed by E334. The active-site Proton acceptor is E334.

Mg(2+) is required as a cofactor.

The enzyme catalyses 2 GTP = 3',3'-c-di-GMP + 2 diphosphate. It functions in the pathway purine metabolism; 3',5'-cyclic di-GMP biosynthesis. Its function is as follows. Part of a signaling cascade that regulates curli biosynthesis. The cascade is composed of two cyclic-di-GMP (c-di-GMP) control modules, in which c-di-GMP controlled by the DgcE/PdeH pair (module I) regulates the activity of the DgcM/PdeR pair (module II), which in turn regulates activity of the transcription factor MlrA and expression of the master biofilm regulator csgD. This is Diguanylate cyclase DgcM from Escherichia coli O157:H7.